The following is a 727-amino-acid chain: Synaptic vesicle glycoprotein 2C (727 aa).

An interaction with SYT1 region spans residues 1 to 57 (MEDSYKDRTSLMKGAKDIAKEVKKQTVKKVNQAVDRAQDEYTQRSYSRFQDEDDDDD). Residues 1 to 154 (MEDSYKDRTS…CGHGRFQWAL (154 aa)) lie on the Cytoplasmic side of the membrane. The tract at residues 22-120 (VKKQTVKKVN…QPKGDEYKDR (99 aa)) is disordered. A phosphoserine mark is found at Ser-75 and Ser-76. Thr-79 is subject to Phosphothreonine. Residues 155–175 (FFVLGMALMADGVEVFVVGFV) form a helical membrane-spanning segment. The Extracellular portion of the chain corresponds to 176–191 (LPSAETDLCIPNSGSG). A helical membrane pass occupies residues 192 to 212 (WLGSIVYLGMMVGAFFWGGLA). The Cytoplasmic portion of the chain corresponds to 213–226 (DKVGRKQSLLICMS). A helical transmembrane segment spans residues 227-247 (VNGFFAFLSSFVQGYGFFLLC). Residue Arg-248 is a topological domain, extracellular. The helical transmembrane segment at 249–269 (LLSGFGIGGAIPTVFSYFAEV) threads the bilayer. Over 270-280 (LAREKRGEHLS) the chain is Cytoplasmic. Residues 281-301 (WLCMFWMIGGIYASAMAWAII) traverse the membrane as a helical segment. At 302–320 (PHYGWSFSMGSAYQFHSWR) the chain is on the extracellular side. Residues 321-341 (VFVIVCALPCVSSVVALTFMP) traverse the membrane as a helical segment. The Cytoplasmic segment spans residues 342–437 (ESPRFLLEVG…PVRENTIKLT (96 aa)). Residues 438 to 458 (IVWFTLSFGYYGLSVWFPDVI) form a helical membrane-spanning segment. Residues 459–578 (KHLQSDEYAL…CQITFDDDYS (120 aa)) are Extracellular-facing. At Tyr-466 the chain carries Phosphotyrosine. N-linked (GlcNAc...) asparagine glycosylation is found at Asn-480, Asn-484, Asn-534, Asn-559, and Asn-565. The tract at residues 529–566 (NTYFKNCTFIDTLFENTDFEPYKFIDSEFQNCSFLHNK) is (Microbial infection) C.botulinum neurotoxin type A-binding. The helical transmembrane segment at 579-599 (AYWIYFVNFLGTLAVLPGNIV) threads the bilayer. Over 600 to 609 (SALLMDRIGR) the chain is Cytoplasmic. The helical transmembrane segment at 610 to 630 (LTMLGGSMVLSGISCFFLWFG) threads the bilayer. Residues 631-636 (TSESMM) lie on the Extracellular side of the membrane. The chain crosses the membrane as a helical span at residues 637–657 (IGMLCLYNGLTISAWNSLDVV). Topologically, residues 658–670 (TVELYPTDRRATG) are cytoplasmic. The helical transmembrane segment at 671-693 (FGFLNALCKAAAVLGNLIFGSLV) threads the bilayer. Topologically, residues 694–697 (SITK) are extracellular. A helical membrane pass occupies residues 698–716 (AIPILLASTVLVCGGLVGL). The Cytoplasmic portion of the chain corresponds to 717–727 (RLPDTRTQVLM).

The protein belongs to the major facilitator superfamily. As to quaternary structure, interacts with SYT1 in a calcium-dependent manner. In terms of assembly, (Microbial infection) Interacts with C.botulinum neurotoxin type A (BoNT/A, botA). (Microbial infection) Interacts with C.botulinum neurotoxin type F (BoNT/F). Interaction requires glycosylation of SV2 proteins. In terms of processing, N-glycosylated. Expressed at high levels in very few brain areas including the striatum, midbrain and hindbrain, and in the olfactory bulb. Expressed at lower levels in cerebrum, hippocampus and cerebellum (at protein level). Mainly expressed in brain; also detected in lung, liver, kidney.

It localises to the cytoplasmic vesicle. It is found in the secretory vesicle. The protein localises to the synaptic vesicle membrane. Plays a role in the control of regulated secretion in neural and endocrine cells, enhancing selectively low-frequency neurotransmission. Positively regulates vesicle fusion by maintaining the readily releasable pool of secretory vesicles. In terms of biological role, (Microbial infection) Receptor for C.botulinum neurotoxin type A (BoNT/A, botA); the toxin binds Sv2c via extracellular loop 4. Restores uptake of BoNT/A in rat cells that are deleted for SV2 receptor. Functionally, (Microbial infection) Possible receptor for C.botulinum neurotoxin type D (BoNT/D, botD); BoNT/D does not bind to extracellular loop 4 as do BoNT/A and BoNT/E. Another group does not find a convincing interaction with SV2. Its function is as follows. (Microbial infection) Receptor for C.botulinum neurotoxin type F (BoNT/F); binding requires glycosylation of Asn-573. This Rattus norvegicus (Rat) protein is Synaptic vesicle glycoprotein 2C (Sv2c).